A 203-amino-acid polypeptide reads, in one-letter code: Cardiotrophin-1 (203 aa).

Belongs to the IL-6 superfamily. Expressed in the ventricle and atrium of adult rats. Also detected in the lung, kidney, liver, skeletal muscle, stomach and urinary bladder. Not detected in brain, colon, testis, spleen or thymus. Overexpressed in the ventricles in the case of hypertension and hypertrophy.

It localises to the secreted. Its function is as follows. Induces cardiac myocyte hypertrophy in vitro. Binds to and activates the ILST/gp130 receptor. This chain is Cardiotrophin-1 (Ctf1), found in Rattus norvegicus (Rat).